The sequence spans 387 residues: Putative F-box protein At1g47800 (387 aa).

Residues 8–54 enclose the F-box domain; sequence LQSLDHIPIDVLFEILVKLPAKSVARFLCVSKVWATMIRGEVFIRSF.

The protein is Putative F-box protein At1g47800 of Arabidopsis thaliana (Mouse-ear cress).